Consider the following 204-residue polypeptide: Guanylate kinase (204 aa).

A Guanylate kinase-like domain is found at 1 to 182 (MLYIISAPSG…ALSDLNTIIC (182 aa)). Residue 7–14 (APSGTGKS) coordinates ATP.

The protein belongs to the guanylate kinase family.

Its subcellular location is the cytoplasm. It carries out the reaction GMP + ATP = GDP + ADP. Its function is as follows. Essential for recycling GMP and indirectly, cGMP. The chain is Guanylate kinase from Baumannia cicadellinicola subsp. Homalodisca coagulata.